The chain runs to 215 residues: Cytochrome b6 (215 aa).

A helical membrane pass occupies residues Ile-32–Phe-52. Heme c is bound at residue Cys-35. Heme b contacts are provided by His-86 and His-100. 3 consecutive transmembrane segments (helical) span residues Ala-90–Phe-110, Leu-116–Tyr-136, and Ala-186–Ile-206. Residues His-187 and His-202 each contribute to the heme b site.

Belongs to the cytochrome b family. PetB subfamily. The 4 large subunits of the cytochrome b6-f complex are cytochrome b6, subunit IV (17 kDa polypeptide, PetD), cytochrome f and the Rieske protein, while the 4 small subunits are PetG, PetL, PetM and PetN. The complex functions as a dimer. It depends on heme b as a cofactor. Requires heme c as cofactor.

Its subcellular location is the cell inner membrane. Component of the cytochrome b6-f complex, which mediates electron transfer between photosystem II (PSII) and photosystem I (PSI), cyclic electron flow around PSI, and state transitions. This chain is Cytochrome b6, found in Gloeobacter violaceus (strain ATCC 29082 / PCC 7421).